The chain runs to 465 residues: Ribulose bisphosphate carboxylase large chain (465 aa).

Lys-4 is subject to N6,N6,N6-trimethyllysine. Asn-113 and Thr-163 together coordinate substrate. Lys-165 acts as the Proton acceptor in catalysis. Lys-167 provides a ligand contact to substrate. Mg(2+)-binding residues include Lys-191, Asp-193, and Glu-194. Lys-191 carries the post-translational modification N6-carboxylysine. Residue His-284 is the Proton acceptor of the active site. The substrate site is built by Arg-285, His-317, and Ser-369.

This sequence belongs to the RuBisCO large chain family. Type I subfamily. Heterohexadecamer of 8 large chains and 8 small chains; disulfide-linked. The disulfide link is formed within the large subunit homodimers. Requires Mg(2+) as cofactor. In terms of processing, the disulfide bond which can form in the large chain dimeric partners within the hexadecamer appears to be associated with oxidative stress and protein turnover.

It localises to the plastid. Its subcellular location is the chloroplast. The catalysed reaction is 2 (2R)-3-phosphoglycerate + 2 H(+) = D-ribulose 1,5-bisphosphate + CO2 + H2O. It catalyses the reaction D-ribulose 1,5-bisphosphate + O2 = 2-phosphoglycolate + (2R)-3-phosphoglycerate + 2 H(+). Functionally, ruBisCO catalyzes two reactions: the carboxylation of D-ribulose 1,5-bisphosphate, the primary event in carbon dioxide fixation, as well as the oxidative fragmentation of the pentose substrate in the photorespiration process. Both reactions occur simultaneously and in competition at the same active site. This is Ribulose bisphosphate carboxylase large chain from Ailanthus altissima (Tree-of-heaven).